Here is a 1169-residue protein sequence, read N- to C-terminus: ATP-dependent helicase/deoxyribonuclease subunit B (1169 aa).

Residues 1-296 (MTLRIVSGRS…QHVEANFANM (296 aa)) form the UvrD-like helicase ATP-binding domain. 8–15 (GRSGTGKS) is an ATP binding site. Residues 276-582 (YYTQRFQSED…EFSRIPPTLD (307 aa)) enclose the UvrD-like helicase C-terminal domain. [4Fe-4S] cluster is bound by residues C804, C1129, C1132, and C1138.

The protein belongs to the helicase family. AddB/RexB type 1 subfamily. In terms of assembly, heterodimer of AddA and AddB. Mg(2+) is required as a cofactor. [4Fe-4S] cluster serves as cofactor.

Its function is as follows. The heterodimer acts as both an ATP-dependent DNA helicase and an ATP-dependent, dual-direction single-stranded exonuclease. Recognizes the chi site generating a DNA molecule suitable for the initiation of homologous recombination. The AddB subunit has 5' -&gt; 3' nuclease activity but not helicase activity. This Lysinibacillus sphaericus (strain C3-41) protein is ATP-dependent helicase/deoxyribonuclease subunit B.